Consider the following 332-residue polypeptide: UPF0194 membrane protein YbhG (332 aa).

The signal sequence occupies residues 1-16 (MMKKPVVIGLAVVVLA). The stretch at 108-209 (EEIAQAAAAV…LNLQDSTLIA (102 aa)) forms a coiled coil.

This sequence belongs to the UPF0194 family.

The protein localises to the periplasm. This chain is UPF0194 membrane protein YbhG, found in Shigella boydii serotype 4 (strain Sb227).